Consider the following 195-residue polypeptide: IQVAAQNCWVKKGGAFTGEVSAEMLANLGVPWVILGHSERRALLNETNEFVGDKVAYALSQGLKVIACVGETLEQREAGTTMEVVAAQTKAIADKISSWDNVVLAYEPVWAIGTGKVASPAQAQEVHAGLRKWFCDNVSAEVSASTRIIYGGSVSGSNCKELGGQTDVDGFLVGGASLKPEFIDIIKAAEVKKSA.

The active-site Electrophile is the His37. Glu107 serves as the catalytic Proton acceptor.

It belongs to the triosephosphate isomerase family. In terms of assembly, homodimer.

The protein resides in the cytoplasm. It catalyses the reaction D-glyceraldehyde 3-phosphate = dihydroxyacetone phosphate. The protein operates within carbohydrate biosynthesis; gluconeogenesis. It functions in the pathway carbohydrate degradation; glycolysis; D-glyceraldehyde 3-phosphate from glycerone phosphate: step 1/1. The protein is Triosephosphate isomerase, cytosolic of Lactuca sativa (Garden lettuce).